We begin with the raw amino-acid sequence, 70 residues long: MWFEILPGLSVMGVCLLIPGLATAYIHRFTNGGKEKRVAHFGYHWSLMERDRRISGVDRYYVSKGLENID.

The helical transmembrane segment at 1–21 threads the bilayer; the sequence is MWFEILPGLSVMGVCLLIPGL.

It belongs to the complex I NDUFA1 subunit family. Complex I is composed of 45 different subunits. Primarily expressed in heart and skeletal muscle.

It is found in the mitochondrion inner membrane. Accessory subunit of the mitochondrial membrane respiratory chain NADH dehydrogenase (Complex I), that is believed not to be involved in catalysis. Complex I functions in the transfer of electrons from NADH to the respiratory chain. The immediate electron acceptor for the enzyme is believed to be ubiquinone. In Homo sapiens (Human), this protein is NADH dehydrogenase [ubiquinone] 1 alpha subcomplex subunit 1 (NDUFA1).